The following is a 141-amino-acid chain: MGRVRTKTVKKSSRQVIEKYYSRMTLDFHTNKKILEEVAIIPSKRLRNKIAGFSTHLMKRIQKGPVRGISLKLQEEERERRMDFVPDESAIKTDEIKVDKETLEMLASLGMSDTLGISAVDPQQAMAPIPAFGGGRAPRRY.

The protein belongs to the eukaryotic ribosomal protein eS17 family.

In Arabidopsis thaliana (Mouse-ear cress), this protein is Small ribosomal subunit protein eS17z (RPS17A).